The sequence spans 299 residues: uncharacterized protein (299 aa).

Over residues 1–10 (MTSIIQSPPL) the composition is skewed to polar residues. Disordered regions lie at residues 1–30 (MTSIIQSPPLNSKKPHLSQDDRINKNNNNN), 54–89 (KLNNNNNNNNNNNNNNNNNNNNNNNNSSSNNNINNN), and 148–212 (QDYT…SDYV). A compositionally biased stretch (low complexity) spans 56-89 (NNNNNNNNNNNNNNNNNNNNNNNNSSSNNNINNN). 2 stretches are compositionally biased toward acidic residues: residues 150–169 (YTDESDNSDEENVDDDDEEE) and 177–212 (ECEEEEEEECEEEEEEDSDEDSDDDDSDDSEDSDYV).

This is an uncharacterized protein from Dictyostelium discoideum (Social amoeba).